Reading from the N-terminus, the 355-residue chain is Erythronate-4-phosphate dehydrogenase (355 aa).

2 residues coordinate substrate: Ser45 and Thr66. Asp146 is an NAD(+) binding site. Arg206 is an active-site residue. Residue Asp229 participates in NAD(+) binding. The active site involves Glu234. The active-site Proton donor is His251. Residue Gly254 participates in NAD(+) binding. Tyr255 is a substrate binding site.

This sequence belongs to the D-isomer specific 2-hydroxyacid dehydrogenase family. PdxB subfamily. Homodimer.

It localises to the cytoplasm. The catalysed reaction is 4-phospho-D-erythronate + NAD(+) = (R)-3-hydroxy-2-oxo-4-phosphooxybutanoate + NADH + H(+). Its pathway is cofactor biosynthesis; pyridoxine 5'-phosphate biosynthesis; pyridoxine 5'-phosphate from D-erythrose 4-phosphate: step 2/5. Catalyzes the oxidation of erythronate-4-phosphate to 3-hydroxy-2-oxo-4-phosphonooxybutanoate. The polypeptide is Erythronate-4-phosphate dehydrogenase (Acinetobacter baumannii (strain ACICU)).